Consider the following 436-residue polypeptide: 3-ketoacyl-CoA thiolase (436 aa).

Residue Cys99 is the Acyl-thioester intermediate of the active site. Catalysis depends on proton acceptor residues His392 and Cys422.

Belongs to the thiolase-like superfamily. Thiolase family. As to quaternary structure, heterotetramer of two alpha chains (FadJ) and two beta chains (FadI).

The protein resides in the cytoplasm. The enzyme catalyses an acyl-CoA + acetyl-CoA = a 3-oxoacyl-CoA + CoA. Its pathway is lipid metabolism; fatty acid beta-oxidation. In terms of biological role, catalyzes the final step of fatty acid oxidation in which acetyl-CoA is released and the CoA ester of a fatty acid two carbons shorter is formed. This chain is 3-ketoacyl-CoA thiolase, found in Shewanella sp. (strain ANA-3).